Here is a 286-residue protein sequence, read N- to C-terminus: 4-hydroxybenzoate octaprenyltransferase (286 aa).

The next 7 membrane-spanning stretches (helical) occupy residues 22 to 42 (IGTL…EKAM), 45 to 65 (LSVL…GCVI), 98 to 118 (LFIV…LYTI), 143 to 163 (FFLG…TIEA), 213 to 233 (IIAL…YLSQ), 238 to 255 (YFIV…QCRL), and 266 to 286 (NAFL…LFGI).

It belongs to the UbiA prenyltransferase family. It depends on Mg(2+) as a cofactor.

Its subcellular location is the cell inner membrane. It carries out the reaction all-trans-octaprenyl diphosphate + 4-hydroxybenzoate = 4-hydroxy-3-(all-trans-octaprenyl)benzoate + diphosphate. It participates in cofactor biosynthesis; ubiquinone biosynthesis. Catalyzes the prenylation of para-hydroxybenzoate (PHB) with an all-trans polyprenyl group. Mediates the second step in the final reaction sequence of ubiquinone-8 (UQ-8) biosynthesis, which is the condensation of the polyisoprenoid side chain with PHB, generating the first membrane-bound Q intermediate 3-octaprenyl-4-hydroxybenzoate. This chain is 4-hydroxybenzoate octaprenyltransferase, found in Histophilus somni (strain 129Pt) (Haemophilus somnus).